The primary structure comprises 99 residues: Nucleoid-associated protein SAG1747 (99 aa).

The segment covering 1 to 10 (MMNMQNMMRQ) has biased composition (low complexity). Positions 1 to 20 (MMNMQNMMRQAQKLQKQMEQ) are disordered.

This sequence belongs to the YbaB/EbfC family. Homodimer.

The protein resides in the cytoplasm. It is found in the nucleoid. Functionally, binds to DNA and alters its conformation. May be involved in regulation of gene expression, nucleoid organization and DNA protection. The sequence is that of Nucleoid-associated protein SAG1747 from Streptococcus agalactiae serotype V (strain ATCC BAA-611 / 2603 V/R).